Reading from the N-terminus, the 241-residue chain is Ribosome-recycling factor, mitochondrial (241 aa).

It belongs to the RRF family.

The protein localises to the mitochondrion. Necessary for protein synthesis in mitochondria. Functions as a ribosome recycling factor in mitochondria. This chain is Ribosome-recycling factor, mitochondrial (RRF1), found in Kluyveromyces lactis (strain ATCC 8585 / CBS 2359 / DSM 70799 / NBRC 1267 / NRRL Y-1140 / WM37) (Yeast).